The sequence spans 260 residues: FAS1 domain-containing protein SELMODRAFT_448915 (260 aa).

The Cytoplasmic portion of the chain corresponds to 1–35 (MRRTGRSYKPLLSQLKDHHIPVHPSSRAERAMESR). Residues 36–58 (TLLVLLFVGVVTIVSSGLERAAA) traverse the membrane as a helical segment. The 140-residue stretch at 59–198 (QDDTDDGILP…IACHGIDRVL (140 aa)) folds into the FAS1 domain. Residues 59-260 (QDDTDDGILP…SSASRYPVSE (202 aa)) are Extracellular-facing. Asn118, Asn169, Asn176, Asn201, Asn236, and Asn247 each carry an N-linked (GlcNAc...) asparagine glycan. The disordered stretch occupies residues 210-260 (PEASPPFGAEQASPAPEALPPGTRSPNNTANPSNRKSNSTRSSASRYPVSE). The segment covering 233–254 (RSPNNTANPSNRKSNSTRSSAS) has biased composition (polar residues).

Its subcellular location is the membrane. The protein is FAS1 domain-containing protein SELMODRAFT_448915 of Selaginella moellendorffii (Spikemoss).